The sequence spans 431 residues: MANVVVVGAQWGDEGKGKIVDWLSERADVIARFQGGHNAGHTLVIDGKVYKLNALPSGVVRGGKLSVIGNGVVLDPWHLIKEIDIIRGQGVDISPETLMIAENTPLILPIHGELDRAREEAASKGTKIGTTGRGIGPAYEDKVGRRSVRVADLADTATLEARVDRALQHHDPLRKGLGIEPVDRDALVAQLVEIAPHILKYAAPVWKVLNEKRRAGKRILFEGAQGALLDIDFGTYPFVTSSNVIAGQAATGVGVGPGAINYVLGIVKAYTTRVGEGPFPAELDDADGQRLGERGHEFGTVTGRKRRCGWFDAVLVRQTCATSGVNGIALTKLDVLDGFETLKICVGYELDGKRMDYLPTAADHQARCRPIYEEMPGWSDSTEGARSWADLPANAIKYVRRVEELIDCPVALLSTSPEREDTILVTDPFAD.

GTP is bound by residues 12-18 (GDEGKGK) and 40-42 (GHT). Residue aspartate 13 is the Proton acceptor of the active site. Positions 13 and 40 each coordinate Mg(2+). Residues 13–16 (DEGK), 38–41 (NAGH), threonine 131, arginine 145, glutamine 225, threonine 240, and arginine 304 each bind IMP. The Proton donor role is filled by histidine 41. Substrate is bound at residue 300–306 (TVTGRKR). GTP-binding positions include arginine 306, 332 to 334 (KLD), and 414 to 416 (STS).

The protein belongs to the adenylosuccinate synthetase family. As to quaternary structure, homodimer. Mg(2+) serves as cofactor.

It is found in the cytoplasm. It catalyses the reaction IMP + L-aspartate + GTP = N(6)-(1,2-dicarboxyethyl)-AMP + GDP + phosphate + 2 H(+). It functions in the pathway purine metabolism; AMP biosynthesis via de novo pathway; AMP from IMP: step 1/2. Plays an important role in the de novo pathway of purine nucleotide biosynthesis. Catalyzes the first committed step in the biosynthesis of AMP from IMP. The protein is Adenylosuccinate synthetase of Roseobacter denitrificans (strain ATCC 33942 / OCh 114) (Erythrobacter sp. (strain OCh 114)).